Reading from the N-terminus, the 260-residue chain is Acetylglutamate kinase (260 aa).

Substrate contacts are provided by residues 46-47, arginine 68, and asparagine 160; that span reads GG.

This sequence belongs to the acetylglutamate kinase family. ArgB subfamily.

The protein resides in the cytoplasm. The enzyme catalyses N-acetyl-L-glutamate + ATP = N-acetyl-L-glutamyl 5-phosphate + ADP. The protein operates within amino-acid biosynthesis; L-arginine biosynthesis; N(2)-acetyl-L-ornithine from L-glutamate: step 2/4. Functionally, catalyzes the ATP-dependent phosphorylation of N-acetyl-L-glutamate. The polypeptide is Acetylglutamate kinase (Shewanella sp. (strain MR-7)).